The primary structure comprises 149 residues: Large ribosomal subunit protein bL9 (149 aa).

Belongs to the bacterial ribosomal protein bL9 family.

In terms of biological role, binds to the 23S rRNA. The protein is Large ribosomal subunit protein bL9 of Rubrobacter xylanophilus (strain DSM 9941 / JCM 11954 / NBRC 16129 / PRD-1).